Here is a 416-residue protein sequence, read N- to C-terminus: UDP-N-acetylglucosamine 1-carboxyvinyltransferase (416 aa).

Position 22–23 (22–23 (KN)) interacts with phosphoenolpyruvate. Residue Arg91 coordinates UDP-N-acetyl-alpha-D-glucosamine. Cys115 acts as the Proton donor in catalysis. The residue at position 115 (Cys115) is a 2-(S-cysteinyl)pyruvic acid O-phosphothioketal. UDP-N-acetyl-alpha-D-glucosamine contacts are provided by residues 120–124 (RPVDL), Asp303, and Ile325.

This sequence belongs to the EPSP synthase family. MurA subfamily.

The protein resides in the cytoplasm. It catalyses the reaction phosphoenolpyruvate + UDP-N-acetyl-alpha-D-glucosamine = UDP-N-acetyl-3-O-(1-carboxyvinyl)-alpha-D-glucosamine + phosphate. It participates in cell wall biogenesis; peptidoglycan biosynthesis. Functionally, cell wall formation. Adds enolpyruvyl to UDP-N-acetylglucosamine. This chain is UDP-N-acetylglucosamine 1-carboxyvinyltransferase, found in Oleidesulfovibrio alaskensis (strain ATCC BAA-1058 / DSM 17464 / G20) (Desulfovibrio alaskensis).